A 228-amino-acid chain; its full sequence is Ribosomal RNA small subunit methyltransferase G (228 aa).

S-adenosyl-L-methionine is bound by residues G89, L94, 140–141 (VE), and R159.

Belongs to the methyltransferase superfamily. RNA methyltransferase RsmG family.

It localises to the cytoplasm. The catalysed reaction is guanosine(527) in 16S rRNA + S-adenosyl-L-methionine = N(7)-methylguanosine(527) in 16S rRNA + S-adenosyl-L-homocysteine. Functionally, specifically methylates the N7 position of guanine in position 527 of 16S rRNA. This is Ribosomal RNA small subunit methyltransferase G from Burkholderia vietnamiensis (strain G4 / LMG 22486) (Burkholderia cepacia (strain R1808)).